The chain runs to 258 residues: Octanoyltransferase (258 aa).

The BPL/LPL catalytic domain maps to 42–226 (NLGADTLLLL…AVVAALDGAL (185 aa)). Substrate contacts are provided by residues 80–87 (RGGKITWH), 156–158 (AIG), and 169–171 (GFS). Cys187 functions as the Acyl-thioester intermediate in the catalytic mechanism.

This sequence belongs to the LipB family.

It is found in the cytoplasm. It carries out the reaction octanoyl-[ACP] + L-lysyl-[protein] = N(6)-octanoyl-L-lysyl-[protein] + holo-[ACP] + H(+). The protein operates within protein modification; protein lipoylation via endogenous pathway; protein N(6)-(lipoyl)lysine from octanoyl-[acyl-carrier-protein]: step 1/2. In terms of biological role, catalyzes the transfer of endogenously produced octanoic acid from octanoyl-acyl-carrier-protein onto the lipoyl domains of lipoate-dependent enzymes. Lipoyl-ACP can also act as a substrate although octanoyl-ACP is likely to be the physiological substrate. The polypeptide is Octanoyltransferase (Rhodococcus opacus (strain B4)).